The following is a 127-amino-acid chain: Glycine cleavage system H protein (127 aa).

Positions 22–104 (EVVIGITHFA…YEGAWMVKVE (83 aa)) constitute a Lipoyl-binding domain. An N6-lipoyllysine modification is found at Lys63.

It belongs to the GcvH family. In terms of assembly, the glycine cleavage system is composed of four proteins: P, T, L and H. (R)-lipoate is required as a cofactor.

In terms of biological role, the glycine cleavage system catalyzes the degradation of glycine. The H protein shuttles the methylamine group of glycine from the P protein to the T protein. Is also involved in protein lipoylation via its role as an octanoyl/lipoyl carrier protein intermediate. This is Glycine cleavage system H protein from Bacillus cereus (strain ZK / E33L).